A 92-amino-acid polypeptide reads, in one-letter code: Conotoxin Cal22f (92 aa).

Residues 1 to 24 (MMSTKGITLFLCLLLLALATSVNG) form the signal peptide. Residues 25 to 44 (GQGTRRSRMTRALHGGRPSA) constitute a propeptide that is removed on maturation.

Contains 4 disulfide bonds. In terms of tissue distribution, expressed by the venom duct.

Its subcellular location is the secreted. Its function is as follows. Probable neurotoxin with unknown target. Possibly targets ion channels. This is Conotoxin Cal22f from Californiconus californicus (California cone).